The chain runs to 94 residues: Mitochondrial import inner membrane translocase subunit Tim8 A (94 aa).

The Twin CX3C motif signature appears at 47-70 (CWDKCIDRPGNKLDSRTESCLVSC). Cystine bridges form between cysteine 47-cysteine 70 and cysteine 51-cysteine 66.

The protein belongs to the small Tim family. Heterohexamer; composed of 3 copies of TIMM8A and 3 copies of TIMM13, named soluble 70 kDa complex. Associates with the TIM22 complex, whose core is composed of TIMM22.

It localises to the mitochondrion inner membrane. Its function is as follows. Mitochondrial intermembrane chaperone that participates in the import and insertion of some multi-pass transmembrane proteins into the mitochondrial inner membrane. Also required for the transfer of beta-barrel precursors from the TOM complex to the sorting and assembly machinery (SAM complex) of the outer membrane. Acts as a chaperone-like protein that protects the hydrophobic precursors from aggregation and guide them through the mitochondrial intermembrane space. The TIMM8-TIMM13 complex mediates the import of some proteins while the predominant TIMM9-TIMM10 70 kDa complex mediates the import of much more proteins. The protein is Mitochondrial import inner membrane translocase subunit Tim8 A (timm8a) of Xenopus laevis (African clawed frog).